A 341-amino-acid polypeptide reads, in one-letter code: tRNA N6-adenosine threonylcarbamoyltransferase (341 aa).

Residues His-116 and His-120 each coordinate Fe cation. Substrate contacts are provided by residues 139–143, Asp-172, Gly-185, and Asn-274; that span reads LVSGG. Residue Asp-302 coordinates Fe cation.

It belongs to the KAE1 / TsaD family. Fe(2+) is required as a cofactor.

The protein resides in the cytoplasm. It carries out the reaction L-threonylcarbamoyladenylate + adenosine(37) in tRNA = N(6)-L-threonylcarbamoyladenosine(37) in tRNA + AMP + H(+). Functionally, required for the formation of a threonylcarbamoyl group on adenosine at position 37 (t(6)A37) in tRNAs that read codons beginning with adenine. Is involved in the transfer of the threonylcarbamoyl moiety of threonylcarbamoyl-AMP (TC-AMP) to the N6 group of A37, together with TsaE and TsaB. TsaD likely plays a direct catalytic role in this reaction. This Vesicomyosocius okutanii subsp. Calyptogena okutanii (strain HA) protein is tRNA N6-adenosine threonylcarbamoyltransferase.